A 325-amino-acid polypeptide reads, in one-letter code: DNA-directed RNA polymerase subunit alpha (325 aa).

An alpha N-terminal domain (alpha-NTD) region spans residues 1–231 (MQTSLLKPKI…DQLSVFAALE (231 aa)). Residues 246 to 325 (IDPILLRPVD…ENWPPAGLDK (80 aa)) are alpha C-terminal domain (alpha-CTD).

It belongs to the RNA polymerase alpha chain family. In terms of assembly, homodimer. The RNAP catalytic core consists of 2 alpha, 1 beta, 1 beta' and 1 omega subunit. When a sigma factor is associated with the core the holoenzyme is formed, which can initiate transcription.

The enzyme catalyses RNA(n) + a ribonucleoside 5'-triphosphate = RNA(n+1) + diphosphate. Its function is as follows. DNA-dependent RNA polymerase catalyzes the transcription of DNA into RNA using the four ribonucleoside triphosphates as substrates. This is DNA-directed RNA polymerase subunit alpha from Burkholderia mallei (strain NCTC 10247).